The primary structure comprises 365 residues: Histidinol-phosphate aminotransferase (365 aa).

The interval methionine 1–proline 22 is disordered. Lysine 221 carries the post-translational modification N6-(pyridoxal phosphate)lysine.

This sequence belongs to the class-II pyridoxal-phosphate-dependent aminotransferase family. Histidinol-phosphate aminotransferase subfamily. Homodimer. Pyridoxal 5'-phosphate serves as cofactor.

The enzyme catalyses L-histidinol phosphate + 2-oxoglutarate = 3-(imidazol-4-yl)-2-oxopropyl phosphate + L-glutamate. Its pathway is amino-acid biosynthesis; L-histidine biosynthesis; L-histidine from 5-phospho-alpha-D-ribose 1-diphosphate: step 7/9. This chain is Histidinol-phosphate aminotransferase, found in Rhodopseudomonas palustris (strain BisA53).